We begin with the raw amino-acid sequence, 87 residues long: Kappa-4-bungarotoxin (87 aa).

The signal sequence occupies residues 1–21 (MKTLLLTLVVVTIVCLDLGYT). 5 disulfides stabilise this stretch: C24–C42, C35–C63, C48–C52, C67–C79, and C80–C85.

Belongs to the three-finger toxin family. Long-chain subfamily. Kappa-neurotoxin sub-subfamily. As to quaternary structure, homo- and heterodimer; non-covalently linked. In terms of tissue distribution, expressed by the venom gland.

It localises to the secreted. Its function is as follows. Postsynaptic neurotoxin that binds and inhibits neuronal nicotinic acetylcholine receptors (nAChR) with high affinity (IC(50)&lt;100 nM). Is a selective, and slowly reversible antagonist of alpha-3/CHRNA3-containing and some alpha-4/CHRNA4-containing AChRs. This Bungarus multicinctus (Many-banded krait) protein is Kappa-4-bungarotoxin.